We begin with the raw amino-acid sequence, 762 residues long: Polymeric immunoglobulin receptor (762 aa).

The first 18 residues, 1–18 (MTLFFLTCLLAVFPVVSM), serve as a signal peptide directing secretion. The Ig-like V-type 1; required for binding to polymeric IgA and IgM domain occupies 19–120 (KSPIFGPPEI…GVGINNRGLS (102 aa)). Topologically, residues 19–636 (KSPIFGPPEI…SSAGQGGSSK (618 aa)) are extracellular. Disulfide bonds link Cys40-Cys110 and Cys56-Cys64. N-linked (GlcNAc...) asparagine glycans are attached at residues Asn83 and Asn135. 4 consecutive Ig-like V-type domains span residues 145-238 (GGKV…DLHV), 251-351 (GSSV…ETTF), 363-460 (GGSV…LKIV), and 464-563 (PNLK…VYVA). 8 disulfide bridges follow: Cys152–Cys221, Cys258–Cys324, Cys272–Cys280, Cys370–Cys443, Cys384–Cys394, Cys484–Cys546, Cys488–Cys522, and Cys498–Cys505. Asn291 is a glycosylation site (N-linked (GlcNAc...) asparagine). A glycan (N-linked (GlcNAc...) asparagine) is linked at Asn423. A glycan (N-linked (GlcNAc...) asparagine) is linked at Asn530. Residues 604–634 (FVDTQAKDPEDAAGGSIASADPGSSAGQGGS) are disordered. A helical transmembrane segment spans residues 637–659 (VVVSTLVPLALVLALGVLVVGVL). Residues 660 to 762 (RARHRKNVDR…ANIQDGPSKA (103 aa)) are Cytoplasmic-facing.

As to quaternary structure, interacts (mainly via CDR1-like domain) with dimeric IgA. Interacts (mainly via CDR2-like domain) with pentameric IgM. Either free or part of the secretory IgA (sIgA) complex that consists of two, four or five IgA monomers, and two additional non-Ig polypeptides, namely the JCHAIN and the secretory component (the proteolytic product of PIGR). Free secretory component interacts with bacterial antigens toxA of C.difficile and eae of E.coli. In terms of processing, N-glycosylated. Carries predominantly biantennary complex type glycans which are largely non-fucosylated. Sialylation with NeuAc is common, except for Asn-291 which carries exclusively high mannose glycans. N-glycans attached to Asn-83: Gal2GlcNAc2Man3GlcNAc2; Gal2GlcNAc2Man3GlcNAc2(Fuc); Gal1GlcNAc1Man4GlcNAc2(Fuc); Gal1GlcNAc1Man3GlcNAc2; Gal1GlcNAc1Man4GlcNAc2 and NeuAc1Gal2GlcNAc2Man3GlcNAc2. N-glycans attached to Asn-135: Gal2GlcNAc2Man3GlcNAc2; Gal1GlcNAc1Man3GlcNAc2 and NeuAc1Gal2GlcNAc2Man3GlcNAc2. N-glycans attached to Asn-291: Man5-8GlcNAc2. N-glycans attached to Asn-423: NeuAc1Gal2GlcNAc2Man3GlcNAc2. N-glycans attached to Asn-530: Gal2GlcNAc2Man3GlcNAc2; Gal1GlcNAc1Man3GlcNAc2 and NeuAc1Gal2GlcNAc2Man3GlcNAc2. N-glycosylation is required for anchoring IgA molecules to mucus but is not necessary for Ig binding.

Its subcellular location is the cell membrane. It is found in the secreted. Functionally, mediates selective transcytosis of polymeric IgA and IgM across mucosal epithelial cells. Binds polymeric IgA and IgM at the basolateral surface of epithelial cells. The complex is then transported across the cell to be secreted at the apical surface. During this process, a cleavage occurs that separates the extracellular (known as the secretory component) from the transmembrane segment. In terms of biological role, through its N-linked glycans ensures anchoring of secretory IgA (sIgA) molecules to mucus lining the epithelial surface to neutralize extracellular pathogens. On its own (free form) may act as a non-specific microbial scavenger to prevent pathogen interaction with epithelial cells. In Equus asinus (Donkey), this protein is Polymeric immunoglobulin receptor (PIGR).